Reading from the N-terminus, the 560-residue chain is DNA ligase B (560 aa).

Residue K124 is the N6-AMP-lysine intermediate of the active site.

This sequence belongs to the NAD-dependent DNA ligase family. LigB subfamily.

It carries out the reaction NAD(+) + (deoxyribonucleotide)n-3'-hydroxyl + 5'-phospho-(deoxyribonucleotide)m = (deoxyribonucleotide)n+m + AMP + beta-nicotinamide D-nucleotide.. Functionally, catalyzes the formation of phosphodiester linkages between 5'-phosphoryl and 3'-hydroxyl groups in double-stranded DNA using NAD as a coenzyme and as the energy source for the reaction. The sequence is that of DNA ligase B from Escherichia coli O6:H1 (strain CFT073 / ATCC 700928 / UPEC).